The chain runs to 635 residues: PTS system mannitol-specific EIICBA component (635 aa).

The PTS EIIC type-2 domain maps to 12–342 (FGRFLSNMVM…LFKTSKVKER (331 aa)). The next 6 helical transmembrane spans lie at 24–45 (IGAF…WLPN), 50–70 (KLVG…TGGK), 134–155 (SAGI…PAVE), 165–185 (VNFM…EPAK), 273–292 (VILG…GGLV), and 313–334 (FANI…AVLF). Positions 378 to 473 (RKIIVACDAG…RLVAAQRHID (96 aa)) constitute a PTS EIIB type-2 domain. The active-site Phosphocysteine intermediate; for EIIB activity is Cys-384. Cys-384 carries the phosphocysteine; by EIIA modification. Positions 494–635 (FQLGADNIFL…VDEVLALLNK (142 aa)) constitute a PTS EIIA type-2 domain. His-554 acts as the Tele-phosphohistidine intermediate; for EIIA activity in catalysis. Position 554 is a phosphohistidine; by HPr (His-554).

In terms of assembly, homodimer. An intramolecular phosphotransfer takes places between His-554 and Cys-384.

The protein resides in the cell inner membrane. The enzyme catalyses D-mannitol(out) + N(pros)-phospho-L-histidyl-[protein] = D-mannitol 1-phosphate(in) + L-histidyl-[protein]. In terms of biological role, the phosphoenolpyruvate-dependent sugar phosphotransferase system (sugar PTS), a major carbohydrate active transport system, catalyzes the phosphorylation of incoming sugar substrates concomitantly with their translocation across the cell membrane. This system is involved in D-mannitol transport. The sequence is that of PTS system mannitol-specific EIICBA component from Klebsiella pneumoniae.